The following is a 350-amino-acid chain: C5a anaphylatoxin chemotactic receptor 1 (350 aa).

At 1-36 the chain is on the extracellular side; that stretch reads APMENSTYDYTNYDSLGTLDPSTPVDNTVRRLRPTT. Asn-5 carries an N-linked (GlcNAc...) asparagine glycan. Sulfotyrosine is present on residues Tyr-10 and Tyr-13. A helical transmembrane segment spans residues 37-63; sequence IVALVIYMAVFLVGVPGNALVVWVTAL. Over 64-68 the chain is Cytoplasmic; it reads EAKRT. A helical transmembrane segment spans residues 69-92; the sequence is VNAIWFLNLAVADLLSCLALPILF. Over 93 to 109 the chain is Extracellular; the sequence is VSIIQEGHWPFGRAACS. A disulfide bridge connects residues Cys-108 and Cys-187. Residues 110 to 131 form a helical membrane-spanning segment; that stretch reads VLPSLILLNMYASILLLATISA. At 132-152 the chain is on the cytoplasmic side; the sequence is DRFLLVFNPIWCQNTRGAGLA. The helical transmembrane segment at 153–173 threads the bilayer; the sequence is WLACCVAWGLALLLTIPSFLY. Over 174–200 the chain is Extracellular; sequence RKVLQDDYPPKTTCGVDYGHEGVRAER. Residues 201 to 226 traverse the membrane as a helical segment; sequence AVAIVRLVVGFLLPLFTLSVCYTFLL. At 227–242 the chain is on the cytoplasmic side; the sequence is LRTWSRNGTRSTKTLK. Residues 243-265 traverse the membrane as a helical segment; it reads VVVAVVVSFFIFWLPYQVMGMIL. The Extracellular segment spans residues 266–282; it reads ALLHPSSATFRWAIRLD. A helical membrane pass occupies residues 283-303; it reads PLCIALAYVNCCINPIIYVVA. The Cytoplasmic segment spans residues 304–350; that stretch reads GKGFQGQLRKSLPSLLRNVLAEESVIQGSKSFSRSTVDTVADKCQAV. 6 positions are modified to phosphoserine: Ser-314, Ser-317, Ser-327, Ser-332, Ser-334, and Ser-338.

Belongs to the G-protein coupled receptor 1 family. As to quaternary structure, homodimer. May also form higher-order oligomers. Interacts (when phosphorylated) with ARRB1 and ARRB2; the interaction is associated with internalization of C5aR. Post-translationally, sulfation plays a critical role in the association of C5aR with C5a, but no significant role in the ability of the receptor to transduce a signal and mobilize calcium in response to a small peptide agonist. Phosphorylated on serine residues in response to C5a binding, resulting in internalization of the receptor and short-term desensitization to C5a.

The protein localises to the cell membrane. It localises to the cytoplasmic vesicle. In terms of biological role, receptor for the chemotactic and inflammatory peptide anaphylatoxin C5a. The ligand interacts with at least two sites on the receptor: a high-affinity site on the extracellular N-terminus, and a second site in the transmembrane region which activates downstream signaling events. Receptor activation stimulates chemotaxis, granule enzyme release, intracellular calcium release and superoxide anion production. The sequence is that of C5a anaphylatoxin chemotactic receptor 1 (C5AR1) from Oryctolagus cuniculus (Rabbit).